Reading from the N-terminus, the 56-residue chain is Small ribosomal subunit protein uS14 (56 aa).

4 residues coordinate Zn(2+): cysteine 21, cysteine 24, cysteine 39, and cysteine 42.

The protein belongs to the universal ribosomal protein uS14 family. Zn(2+) serves as cofactor.

The chain is Small ribosomal subunit protein uS14 (RPS29) from Candida glabrata (strain ATCC 2001 / BCRC 20586 / JCM 3761 / NBRC 0622 / NRRL Y-65 / CBS 138) (Yeast).